The primary structure comprises 508 residues: Replication factor C large subunit (508 aa).

An ATP-binding site is contributed by 43-50 (GSPGIGKT). The disordered stretch occupies residues 425–508 (AVEHSGGVFE…DQQSGLSDFM (84 aa)). 2 stretches are compositionally biased toward acidic residues: residues 443–461 (GDSD…EESG) and 483–500 (TTDD…DDDQ).

This sequence belongs to the activator 1 small subunits family. RfcL subfamily. As to quaternary structure, heteromultimer composed of small subunits (RfcS) and large subunits (RfcL).

Part of the RFC clamp loader complex which loads the PCNA sliding clamp onto DNA. In Haloarcula marismortui (strain ATCC 43049 / DSM 3752 / JCM 8966 / VKM B-1809) (Halobacterium marismortui), this protein is Replication factor C large subunit.